A 329-amino-acid chain; its full sequence is Tryptophan--tRNA ligase (329 aa).

Residues 9 to 11 (QPS) and 17 to 18 (GN) contribute to the ATP site. A 'HIGH' region motif is present at residues 10–18 (PSGTITLGN). D132 contributes to the L-tryptophan binding site. ATP contacts are provided by residues 144-146 (GDD), V183, and 192-196 (KMSKS). Residues 192–196 (KMSKS) carry the 'KMSKS' region motif.

It belongs to the class-I aminoacyl-tRNA synthetase family. In terms of assembly, homodimer.

It localises to the cytoplasm. It catalyses the reaction tRNA(Trp) + L-tryptophan + ATP = L-tryptophyl-tRNA(Trp) + AMP + diphosphate + H(+). Functionally, catalyzes the attachment of tryptophan to tRNA(Trp). This Bacillus anthracis protein is Tryptophan--tRNA ligase.